Reading from the N-terminus, the 429-residue chain is 3-isopropylmalate dehydratase large subunit (429 aa).

Residues C303, C363, and C366 each coordinate [4Fe-4S] cluster.

Belongs to the aconitase/IPM isomerase family. LeuC type 2 subfamily. As to quaternary structure, heterodimer of LeuC and LeuD. It depends on [4Fe-4S] cluster as a cofactor.

The catalysed reaction is (2R,3S)-3-isopropylmalate = (2S)-2-isopropylmalate. It participates in amino-acid biosynthesis; L-leucine biosynthesis; L-leucine from 3-methyl-2-oxobutanoate: step 2/4. Functionally, catalyzes the isomerization between 2-isopropylmalate and 3-isopropylmalate, via the formation of 2-isopropylmaleate. The polypeptide is 3-isopropylmalate dehydratase large subunit (Caldicellulosiruptor bescii (strain ATCC BAA-1888 / DSM 6725 / KCTC 15123 / Z-1320) (Anaerocellum thermophilum)).